The sequence spans 285 residues: Nucleotide-binding protein Geob_2284 (285 aa).

An ATP-binding site is contributed by 8 to 15; it reads GLSGSGKS. Position 59–62 (59–62) interacts with GTP; sequence DIRG.

The protein belongs to the RapZ-like family.

Functionally, displays ATPase and GTPase activities. The sequence is that of Nucleotide-binding protein Geob_2284 from Geotalea daltonii (strain DSM 22248 / JCM 15807 / FRC-32) (Geobacter daltonii).